The sequence spans 66 residues: Cell division protein FtsB (66 aa).

Residues 1-3 (MKM) are Cytoplasmic-facing. Residues 4–21 (LKIFLLFLLFWLQCSLWI) traverse the membrane as a helical segment. The Extracellular segment spans residues 22–66 (GKNGILDYIKIYKKIIVQKKKNEDFQIRNNQLILEIERLNNAIKN). The stretch at 38-66 (VQKKKNEDFQIRNNQLILEIERLNNAIKN) forms a coiled coil.

It belongs to the FtsB family.

It is found in the cell membrane. Functionally, essential cell division protein. May link together the upstream cell division proteins, which are predominantly cytoplasmic, with the downstream cell division proteins, which are predominantly extracellular. This chain is Cell division protein FtsB, found in Buchnera aphidicola subsp. Schizaphis graminum (strain Sg).